Reading from the N-terminus, the 236-residue chain is uncharacterized protein (236 aa).

Its subcellular location is the plastid. It localises to the chloroplast. This is an uncharacterized protein from Chlorella vulgaris (Green alga).